Consider the following 141-residue polypeptide: Nucleoside diphosphate kinase (141 aa).

ATP is bound by residues Lys11, Phe59, Arg87, Thr93, Arg104, and Asn114. His117 functions as the Pros-phosphohistidine intermediate in the catalytic mechanism.

Belongs to the NDK family. Homotetramer. The cofactor is Mg(2+).

The protein localises to the cytoplasm. The enzyme catalyses a 2'-deoxyribonucleoside 5'-diphosphate + ATP = a 2'-deoxyribonucleoside 5'-triphosphate + ADP. It catalyses the reaction a ribonucleoside 5'-diphosphate + ATP = a ribonucleoside 5'-triphosphate + ADP. Major role in the synthesis of nucleoside triphosphates other than ATP. The ATP gamma phosphate is transferred to the NDP beta phosphate via a ping-pong mechanism, using a phosphorylated active-site intermediate. The chain is Nucleoside diphosphate kinase from Bordetella petrii (strain ATCC BAA-461 / DSM 12804 / CCUG 43448).